Consider the following 511-residue polypeptide: Glucans biosynthesis protein G (511 aa).

A signal peptide spans 1 to 22; the sequence is MMKMRWLSAAVMLTLYTSSSWA.

It belongs to the OpgD/OpgG family.

It is found in the periplasm. The protein operates within glycan metabolism; osmoregulated periplasmic glucan (OPG) biosynthesis. Functionally, involved in the biosynthesis of osmoregulated periplasmic glucans (OPGs). In Shigella dysenteriae serotype 1 (strain Sd197), this protein is Glucans biosynthesis protein G.